The chain runs to 129 residues: Histone H2B.1 (129 aa).

Residues 1–19 show a composition bias toward basic and acidic residues; it reads MAPKAEKKPASKAPAEKKP. The interval 1–37 is disordered; the sequence is MAPKAEKKPASKAPAEKKPAAKKTASTDSKKRTKTRK. N6-acetyllysine; alternate is present on residues K7 and K8. Residues K7 and K8 each participate in a glycyl lysine isopeptide (Lys-Gly) (interchain with G-Cter in SUMO); alternate cross-link. Phosphoserine is present on S11. K12 carries the post-translational modification N6-acetyllysine. K17 carries the post-translational modification N6-acetyllysine; alternate. K17 participates in a covalent cross-link: Glycyl lysine isopeptide (Lys-Gly) (interchain with G-Cter in SUMO); alternate. K18 is covalently cross-linked (Glycyl lysine isopeptide (Lys-Gly) (interchain with G-Cter in SUMO)). A Glycyl lysine isopeptide (Lys-Gly) (interchain with G-Cter in ubiquitin) cross-link involves residue K123.

Belongs to the histone H2B family. As to quaternary structure, the nucleosome is a histone octamer containing two molecules each of H2A, H2B, H3 and H4 assembled in one H3-H4 heterotetramer and two H2A-H2B heterodimers. The octamer wraps approximately 147 bp of DNA. In terms of processing, monoubiquitinated by the UBC2-BRE1 complex to form H2BK123ub1. H2BK123ub1 gives a specific tag for epigenetic transcriptional activation and is also prerequisite for H3K4me and H3K79me formation. H2BK123ub1 also modulates the formation of double-strand breaks during meiosis and is a prerequisite for DNA-damage checkpoint activation. Phosphorylated by STE20 to form H2BS10ph during progression through meiotic prophase. May be correlated with chromosome condensation. Post-translationally, acetylated by GCN5 to form H2BK11ac and H2BK16ac. H2BK16ac can also be formed by ESA1. Acetylation of N-terminal lysines and particularly formation of H2BK11acK16ac has a positive effect on transcription. In terms of processing, sumoylation to form H2BK6su or H2BK7su, and probably also H2BK16su or H2BK17su, occurs preferentially near the telomeres and represses gene transcription.

It is found in the nucleus. It localises to the chromosome. In terms of biological role, core component of nucleosome. Nucleosomes wrap and compact DNA into chromatin, limiting DNA accessibility to the cellular machineries which require DNA as a template. Histones thereby play a central role in transcription regulation, DNA repair, DNA replication and chromosomal stability. DNA accessibility is regulated via a complex set of post-translational modifications of histones, also called histone code, and nucleosome remodeling. In Meyerozyma guilliermondii (strain ATCC 6260 / CBS 566 / DSM 6381 / JCM 1539 / NBRC 10279 / NRRL Y-324) (Yeast), this protein is Histone H2B.1 (HTB1).